Here is a 483-residue protein sequence, read N- to C-terminus: Aspartyl/glutamyl-tRNA(Asn/Gln) amidotransferase subunit B (483 aa).

It belongs to the GatB/GatE family. GatB subfamily. As to quaternary structure, heterotrimer of A, B and C subunits.

The enzyme catalyses L-glutamyl-tRNA(Gln) + L-glutamine + ATP + H2O = L-glutaminyl-tRNA(Gln) + L-glutamate + ADP + phosphate + H(+). It carries out the reaction L-aspartyl-tRNA(Asn) + L-glutamine + ATP + H2O = L-asparaginyl-tRNA(Asn) + L-glutamate + ADP + phosphate + 2 H(+). In terms of biological role, allows the formation of correctly charged Asn-tRNA(Asn) or Gln-tRNA(Gln) through the transamidation of misacylated Asp-tRNA(Asn) or Glu-tRNA(Gln) in organisms which lack either or both of asparaginyl-tRNA or glutaminyl-tRNA synthetases. The reaction takes place in the presence of glutamine and ATP through an activated phospho-Asp-tRNA(Asn) or phospho-Glu-tRNA(Gln). This is Aspartyl/glutamyl-tRNA(Asn/Gln) amidotransferase subunit B from Rickettsia africae (strain ESF-5).